A 1492-amino-acid polypeptide reads, in one-letter code: ATP-binding cassette sub-family C member 10 (1492 aa).

Transmembrane regions (helical) follow at residues 32–52 (LVLS…YLGT), 70–90 (LAAS…VALP), 102–122 (VLAG…LWVL), 133–153 (PLAL…TVLW), 172–192 (LCLL…WAAP), 293–313 (LVGT…VGFL), 320–340 (LSHG…GAVL), 391–411 (LLNF…LAIT), and 414–434 (LLYQ…LLLV). Residues 285–563 (YLALGLLKLV…FPWVINGLLE (279 aa)) form the ABC transmembrane type-1 1 domain. Thr463 is modified (phosphothreonine). Position 467 is a phosphoserine (Ser467). A run of 2 helical transmembrane segments spans residues 507-527 (VYLW…TYVL) and 538-558 (FTAL…PWVI). Positions 598-824 (LELHGALFSW…VQAVPKAWAE (227 aa)) constitute an ABC transporter 1 domain. 633-640 (GKVGCGKS) lines the ATP pocket. Positions 825–860 (NGQESDSATAQSVQNPEKTKEGLEEEQSTSGRLLQE) are disordered. The segment covering 826–840 (GQESDSATAQSVQNP) has biased composition (polar residues). 6 helical membrane passes run 875–895 (AYWK…LLLM), 933–953 (LFSP…VFPL), 974–994 (IAGV…AGTL), 1051–1071 (AGLL…LLLL), 1153–1173 (IRLQ…ALVQ), and 1182–1202 (GLVG…SGLV). The ABC transmembrane type-1 2 domain occupies 885–1210 (ALAILFSLLL…LVSSFTQTEA (326 aa)). In terms of domain architecture, ABC transporter 2 spans 1246 to 1479 (VEFQDVVLAY…PHSLFQQLLQ (234 aa)). ATP is bound at residue 1280–1287 (GRTGSGKS).

This sequence belongs to the ABC transporter superfamily. ABCC family. Conjugate transporter (TC 3.A.1.208) subfamily. In testis, localized to peritubular myoid cells, Leydig cells, along the basal membrane of Sertoli cells, moderately in the adluminal compartment of the seminiferous tubules, and in vascular endothelial cells. In terms of tissue distribution, specifically expressed in spleen. As to expression, widely expressed.

It is found in the cell membrane. Its subcellular location is the basolateral cell membrane. The protein localises to the basal cell membrane. The enzyme catalyses ATP + H2O + xenobioticSide 1 = ADP + phosphate + xenobioticSide 2.. The catalysed reaction is an S-substituted glutathione(in) + ATP + H2O = an S-substituted glutathione(out) + ADP + phosphate + H(+). It carries out the reaction 17beta-estradiol 17-O-(beta-D-glucuronate)(in) + ATP + H2O = 17beta-estradiol 17-O-(beta-D-glucuronate)(out) + ADP + phosphate + H(+). It catalyses the reaction leukotriene C4(in) + ATP + H2O = leukotriene C4(out) + ADP + phosphate + H(+). Functionally, ATP-dependent transporter of the ATP-binding cassette (ABC) family that actively extrudes physiological compounds, and xenobiotics from cells. Lipophilic anion transporter that mediates ATP-dependent transport of glucuronide conjugates such as estradiol-17-beta-o-glucuronide and GSH conjugates such as leukotriene C4 (LTC4). May contribute to regulate the transport of organic compounds in testes across the blood-testis-barrier. Mediates multidrug resistance (MDR) in cancer cells by preventing the intracellular accumulation of certain antitumor drugs, such as, docetaxel and paclitaxel. Does not transport glycocholic acid, taurocholic acid, MTX, folic acid, cAMP, or cGMP. The sequence is that of ATP-binding cassette sub-family C member 10 (ABCC10) from Homo sapiens (Human).